The sequence spans 201 residues: Peptidyl-tRNA hydrolase (201 aa).

Tyr-14 lines the tRNA pocket. Catalysis depends on His-19, which acts as the Proton acceptor. TRNA contacts are provided by Tyr-64, Asn-66, and Asn-112.

The protein belongs to the PTH family. In terms of assembly, monomer.

It is found in the cytoplasm. The enzyme catalyses an N-acyl-L-alpha-aminoacyl-tRNA + H2O = an N-acyl-L-amino acid + a tRNA + H(+). Its function is as follows. Hydrolyzes ribosome-free peptidyl-tRNAs (with 1 or more amino acids incorporated), which drop off the ribosome during protein synthesis, or as a result of ribosome stalling. Catalyzes the release of premature peptidyl moieties from peptidyl-tRNA molecules trapped in stalled 50S ribosomal subunits, and thus maintains levels of free tRNAs and 50S ribosomes. The protein is Peptidyl-tRNA hydrolase of Rhodopseudomonas palustris (strain BisB18).